Here is a 420-residue protein sequence, read N- to C-terminus: Serine hydroxymethyltransferase (420 aa).

Residues Leu-121 and Gly-125–Leu-127 contribute to the (6S)-5,6,7,8-tetrahydrofolate site. Position 230 is an N6-(pyridoxal phosphate)lysine (Lys-230). (6S)-5,6,7,8-tetrahydrofolate contacts are provided by residues Glu-246 and Ser-354–Phe-356.

Belongs to the SHMT family. As to quaternary structure, homodimer. Requires pyridoxal 5'-phosphate as cofactor.

The protein localises to the cytoplasm. The catalysed reaction is (6R)-5,10-methylene-5,6,7,8-tetrahydrofolate + glycine + H2O = (6S)-5,6,7,8-tetrahydrofolate + L-serine. The protein operates within one-carbon metabolism; tetrahydrofolate interconversion. Its pathway is amino-acid biosynthesis; glycine biosynthesis; glycine from L-serine: step 1/1. In terms of biological role, catalyzes the reversible interconversion of serine and glycine with tetrahydrofolate (THF) serving as the one-carbon carrier. This reaction serves as the major source of one-carbon groups required for the biosynthesis of purines, thymidylate, methionine, and other important biomolecules. Also exhibits THF-independent aldolase activity toward beta-hydroxyamino acids, producing glycine and aldehydes, via a retro-aldol mechanism. The chain is Serine hydroxymethyltransferase from Rickettsia akari (strain Hartford).